The following is a 704-amino-acid chain: Eukaryotic translation initiation factor 2-alpha kinase 1 (704 aa).

A Protein kinase domain is found at Phe-224–Val-667. Residues Leu-230–Val-238 and Lys-253 contribute to the ATP site. The active-site Proton acceptor is Asp-491.

This sequence belongs to the protein kinase superfamily. Ser/Thr protein kinase family. GCN2 subfamily. In terms of processing, autophosphorylated.

The catalysed reaction is L-seryl-[protein] + ATP = O-phospho-L-seryl-[protein] + ADP + H(+). It carries out the reaction L-threonyl-[protein] + ATP = O-phospho-L-threonyl-[protein] + ADP + H(+). Functionally, mediates down-regulation of protein synthesis in response to stress conditions by the phosphorylation of the alpha subunit of eIF-2 (tif211) on 'Ser-52'. Protein synthesis is inhibited at the level of initiation. Activity is inhibited in the presence of heme. The polypeptide is Eukaryotic translation initiation factor 2-alpha kinase 1 (hri1) (Schizosaccharomyces pombe (strain 972 / ATCC 24843) (Fission yeast)).